The sequence spans 154 residues: tRNA (cytidine(34)-2'-O)-methyltransferase (154 aa).

Positions 78, 100, 122, and 130 each coordinate S-adenosyl-L-methionine.

It belongs to the class IV-like SAM-binding methyltransferase superfamily. RNA methyltransferase TrmH family. TrmL subfamily. As to quaternary structure, homodimer.

It is found in the cytoplasm. The enzyme catalyses cytidine(34) in tRNA + S-adenosyl-L-methionine = 2'-O-methylcytidine(34) in tRNA + S-adenosyl-L-homocysteine + H(+). It catalyses the reaction 5-carboxymethylaminomethyluridine(34) in tRNA(Leu) + S-adenosyl-L-methionine = 5-carboxymethylaminomethyl-2'-O-methyluridine(34) in tRNA(Leu) + S-adenosyl-L-homocysteine + H(+). Its function is as follows. Methylates the ribose at the nucleotide 34 wobble position in the two leucyl isoacceptors tRNA(Leu)(CmAA) and tRNA(Leu)(cmnm5UmAA). Catalyzes the methyl transfer from S-adenosyl-L-methionine to the 2'-OH of the wobble nucleotide. The chain is tRNA (cytidine(34)-2'-O)-methyltransferase from Methylovorus glucosotrophus (strain SIP3-4).